The primary structure comprises 78 residues: UPF0291 protein ABC2165 (78 aa).

The segment at 56–78 is disordered; the sequence is AKGNDVTPQKLKDSKAQKHKRLH.

Belongs to the UPF0291 family.

It is found in the cytoplasm. The protein is UPF0291 protein ABC2165 of Shouchella clausii (strain KSM-K16) (Alkalihalobacillus clausii).